The following is a 604-amino-acid chain: Glutamyl-tRNA(Gln) amidotransferase subunit B, mitochondrial (604 aa).

A mitochondrion-targeting transit peptide spans 1–48 (MIRQCLSRRGAYSRYRLAARGVELAEPFHHQSSRPQGRRNWSSSPRCS). The interval 28–57 (FHHQSSRPQGRRNWSSSPRCSLDIRTDTPR) is disordered. Over residues 33–46 (SRPQGRRNWSSSPR) the composition is skewed to polar residues.

This sequence belongs to the GatB/GatE family. GatB subfamily. As to quaternary structure, subunit of the heterotrimeric GatCAB amidotransferase (AdT) complex, composed of A, B and C subunits.

It is found in the mitochondrion. It catalyses the reaction L-glutamyl-tRNA(Gln) + L-glutamine + ATP + H2O = L-glutaminyl-tRNA(Gln) + L-glutamate + ADP + phosphate + H(+). Allows the formation of correctly charged Gln-tRNA(Gln) through the transamidation of misacylated Glu-tRNA(Gln) in the mitochondria. The reaction takes place in the presence of glutamine and ATP through an activated gamma-phospho-Glu-tRNA(Gln). This is Glutamyl-tRNA(Gln) amidotransferase subunit B, mitochondrial from Ajellomyces dermatitidis (strain ER-3 / ATCC MYA-2586) (Blastomyces dermatitidis).